The chain runs to 593 residues: Aspartate--tRNA ligase (593 aa).

Glutamate 180 provides a ligand contact to L-aspartate. Positions 204 to 207 are aspartate; that stretch reads QIFK. Arginine 226 is an L-aspartate binding site. Residues 226 to 228 and glutamine 235 each bind ATP; that span reads RDE. Histidine 453 is a binding site for L-aspartate. Glutamate 487 contacts ATP. Arginine 494 provides a ligand contact to L-aspartate. Residue 539 to 542 participates in ATP binding; that stretch reads GLDR.

It belongs to the class-II aminoacyl-tRNA synthetase family. Type 1 subfamily. As to quaternary structure, homodimer.

It is found in the cytoplasm. The catalysed reaction is tRNA(Asp) + L-aspartate + ATP = L-aspartyl-tRNA(Asp) + AMP + diphosphate. Its function is as follows. Catalyzes the attachment of L-aspartate to tRNA(Asp) in a two-step reaction: L-aspartate is first activated by ATP to form Asp-AMP and then transferred to the acceptor end of tRNA(Asp). The chain is Aspartate--tRNA ligase from Clostridium botulinum (strain Loch Maree / Type A3).